Here is a 387-residue protein sequence, read N- to C-terminus: Probable peptidoglycan glycosyltransferase FtsW (387 aa).

Transmembrane regions (helical) follow at residues 19–39, 61–81, 86–106, 118–138, 161–181, 199–219, 286–306, 320–340, and 352–372; these read LDFS…VMVA, ITFL…PMSV, SGLL…PGIG, LGPF…VYFA, VLLI…SVVI, FLLL…ASPY, FIGA…LVIL, YVVF…MGVA, and PFIS…ALVF.

Belongs to the SEDS family. FtsW subfamily.

The protein localises to the cell inner membrane. It carries out the reaction [GlcNAc-(1-&gt;4)-Mur2Ac(oyl-L-Ala-gamma-D-Glu-L-Lys-D-Ala-D-Ala)](n)-di-trans,octa-cis-undecaprenyl diphosphate + beta-D-GlcNAc-(1-&gt;4)-Mur2Ac(oyl-L-Ala-gamma-D-Glu-L-Lys-D-Ala-D-Ala)-di-trans,octa-cis-undecaprenyl diphosphate = [GlcNAc-(1-&gt;4)-Mur2Ac(oyl-L-Ala-gamma-D-Glu-L-Lys-D-Ala-D-Ala)](n+1)-di-trans,octa-cis-undecaprenyl diphosphate + di-trans,octa-cis-undecaprenyl diphosphate + H(+). Its pathway is cell wall biogenesis; peptidoglycan biosynthesis. Its function is as follows. Peptidoglycan polymerase that is essential for cell division. The protein is Probable peptidoglycan glycosyltransferase FtsW of Saccharophagus degradans (strain 2-40 / ATCC 43961 / DSM 17024).